A 239-amino-acid polypeptide reads, in one-letter code: tRNA1(Val) (adenine(37)-N6)-methyltransferase (239 aa).

This sequence belongs to the methyltransferase superfamily. tRNA (adenine-N(6)-)-methyltransferase family.

The protein resides in the cytoplasm. The catalysed reaction is adenosine(37) in tRNA1(Val) + S-adenosyl-L-methionine = N(6)-methyladenosine(37) in tRNA1(Val) + S-adenosyl-L-homocysteine + H(+). Specifically methylates the adenine in position 37 of tRNA(1)(Val) (anticodon cmo5UAC). The chain is tRNA1(Val) (adenine(37)-N6)-methyltransferase from Vibrio parahaemolyticus serotype O3:K6 (strain RIMD 2210633).